The following is a 337-amino-acid chain: Dehydrogenase FUB6 (337 aa).

Belongs to the zinc-containing alcohol dehydrogenase family. Quinone oxidoreductase subfamily.

It functions in the pathway mycotoxin biosynthesis. Dehydrogenase; part of the gene cluster that mediates the biosynthesis of fusaric acid, a mycotoxin with low to moderate toxicity to animals and humans, but with high phytotoxic properties. L-aspartate is suggested as fusaric acid amino acid precursor that is activated and further processed to O-acetyl-L-homoserine by cluster enzymes aspartate kinase FUB3 and homoserine O-acetyltransferase FUB5, as well as enzymes of the primary metabolism. The polyketide synthase (PKS) FUB1 generates the triketide trans-2-hexenal which is presumptively released by the hydrolase FUB4 and linked to the NRPS-bound amino acid precursor by NAD(P)-dependent dehydrogenase FUB6. FUB1, FUB4, and the non-canonical NRPS Fub8 may form an enzyme complex. Further processing of the NRPS-bound intermediate might be carried out by FUB6 and the O-acetylhomoserine FUB7, enabling a spontaneous electrocyclization to close the carbon backbone of fusaric acid. Dihydrofusaric acid is likely to be released via reduction by the thioester reductase (TR) domain of FUB8 whereupon the final oxidation to fusaric acid may (also) be performed by the FMN-dependent dehydrogenase FUB9. In Gibberella fujikuroi (strain CBS 195.34 / IMI 58289 / NRRL A-6831) (Bakanae and foot rot disease fungus), this protein is Dehydrogenase FUB6.